Reading from the N-terminus, the 243-residue chain is Large ribosomal subunit protein uL2 (243 aa).

Disordered stretches follow at residues 1 to 23 (MGKR…PSHR) and 204 to 243 (PFGG…GGRR). Positions 228 to 243 (KVGHIAARKTGRGGRR) are enriched in basic residues.

Belongs to the universal ribosomal protein uL2 family. Part of the 50S ribosomal subunit. Forms a bridge to the 30S subunit in the 70S ribosome.

Functionally, one of the primary rRNA binding proteins. Required for association of the 30S and 50S subunits to form the 70S ribosome, for tRNA binding and peptide bond formation. It has been suggested to have peptidyltransferase activity; this is somewhat controversial. Makes several contacts with the 16S rRNA in the 70S ribosome. This is Large ribosomal subunit protein uL2 from Methanopyrus kandleri (strain AV19 / DSM 6324 / JCM 9639 / NBRC 100938).